The primary structure comprises 156 residues: Small ribosomal subunit protein uS7 (156 aa).

It belongs to the universal ribosomal protein uS7 family. Part of the 30S ribosomal subunit. Contacts proteins S9 and S11.

In terms of biological role, one of the primary rRNA binding proteins, it binds directly to 16S rRNA where it nucleates assembly of the head domain of the 30S subunit. Is located at the subunit interface close to the decoding center, probably blocks exit of the E-site tRNA. In Lacticaseibacillus casei (strain BL23) (Lactobacillus casei), this protein is Small ribosomal subunit protein uS7.